We begin with the raw amino-acid sequence, 116 residues long: NADH-ubiquinone oxidoreductase chain 3 (116 aa).

3 helical membrane-spanning segments follow: residues 3 to 23 (LILAGLLIMSILSMILAMIAF), 56 to 76 (FFLVAILFLLFDLEIALLLPL), and 85 to 105 (PTLALTWTTSIIALLTLGLIH).

The protein belongs to the complex I subunit 3 family.

It is found in the mitochondrion membrane. The enzyme catalyses a ubiquinone + NADH + 5 H(+)(in) = a ubiquinol + NAD(+) + 4 H(+)(out). Functionally, core subunit of the mitochondrial membrane respiratory chain NADH dehydrogenase (Complex I) that is believed to belong to the minimal assembly required for catalysis. Complex I functions in the transfer of electrons from NADH to the respiratory chain. The immediate electron acceptor for the enzyme is believed to be ubiquinone. In Latimeria chalumnae (Coelacanth), this protein is NADH-ubiquinone oxidoreductase chain 3 (MT-ND3).